An 861-amino-acid polypeptide reads, in one-letter code: ToMV resistant protein Tm-2 netted virescent (861 aa).

Positions 63–83 (VKNLLKDIQELAGDVEDLLDD) form a coiled coil. The NB-ARC domain occupies 162-388 (DDFNMLQAKL…LESMGHKVQD (227 aa)). 185 to 192 (GMPGLGKT) is a binding site for ATP. LRR repeat units lie at residues 225–248 (LDIAKQIGLTEQKMKENLEDNLRS), 305–327 (LHALQPLESEKSFELFTKKIFNF), 388–411 (DGCAKVLALSYNDLPIASRPCFLY), 449–472 (LAEDVLNDLVSRNLIQLAKRTYNG), 510–536 (VARLRRITFYSDNVMIEFFRSNPKLEK), 585–608 (MTCLRYLRLEGNICGKLPNSIVKL), 609–631 (TRLETIDIDRRSLIQPPSGVWES), 652–680 (ISSFYPNIYSLHPNNLQTLMWIPDKFFEP), 689–710 (LRKLGILGVSNSTVKMLSIFSP), 712–735 (LKALEVLKLSFSSDPSEQIKLSSY), 736–758 (PHIAKLHLNVNRTMALNSQSFPP), 784–807 (LRKLKMFICKYNEEKMALSGEANG), and 810–835 (FPQLEVLHIHSPNGLSEVTCTDDVSM).

It belongs to the disease resistance NB-LRR family. (Microbial infection) Interacts with tobamoviruses mouvement protein at the plasma membrane; this interaction triggers defense responses leading to programmed cell death. In terms of assembly, binds to HSP90 proteins; this interaction seems required for defense responses toward tobamoviruses.

It localises to the cell membrane. Functionally, inhibitor of viral mouvements which confers resistance to some tobamoviruses including tomato mosaic virus (ToMV) (e.g. isolate L and W3) and tobacco mosaic virus (TMV), but not to resistance-breaking isolates (e.g. Ltbl) ToMV and tomato brown rugose fruit virus (ToBRFV). Elicits a hypersensitive reaction in response to avirulent (Avr) movement proteins from resistance inducing tobamoviruses (e.g. ToMV and TMV) strains, thus leading to programmed cell death. The protein is ToMV resistant protein Tm-2 netted virescent of Solanum lycopersicum (Tomato).